The primary structure comprises 241 residues: NADPH-dependent FMN reductase ArsH (241 aa).

43–50 (SLRTVSYS) contributes to the FMN binding site.

This sequence belongs to the ArsH family. Homotetramer. It depends on FMN as a cofactor.

Its function is as follows. Has NADPH-dependent FMN reductase activity. No activity with NADH. May play a role in resistance to heavy metal toxicity. This is NADPH-dependent FMN reductase ArsH from Rhizobium meliloti (strain 1021) (Ensifer meliloti).